Consider the following 211-residue polypeptide: Glutathione S-transferase class-mu 28 kDa isozyme (211 aa).

The GST N-terminal domain occupies 4 to 86; the sequence is DHIKVIYFNG…YMAKKHHMMG (83 aa). Positions 10, 16, 41, 45, 53, 70, 71, and 104 each coordinate glutathione. One can recognise a GST C-terminal domain in the interval 88–211; sequence TDEEYYNVEK…YLSDRAATPF (124 aa).

This sequence belongs to the GST superfamily. Mu family. In terms of assembly, homodimer.

It catalyses the reaction RX + glutathione = an S-substituted glutathione + a halide anion + H(+). Functionally, conjugation of reduced glutathione to a wide number of exogenous and endogenous hydrophobic electrophiles. In terms of biological role, GST isoenzymes appear to play a central role in the parasite detoxification system. Other functions are also suspected including a role in increasing the solubility of haematin in the parasite gut. The sequence is that of Glutathione S-transferase class-mu 28 kDa isozyme from Schistosoma bovis (Blood fluke).